The following is a 142-amino-acid chain: ATP synthase epsilon chain (142 aa).

The protein belongs to the ATPase epsilon chain family. In terms of assembly, F-type ATPases have 2 components, CF(1) - the catalytic core - and CF(0) - the membrane proton channel. CF(1) has five subunits: alpha(3), beta(3), gamma(1), delta(1), epsilon(1). CF(0) has three main subunits: a, b and c.

The protein resides in the cell inner membrane. In terms of biological role, produces ATP from ADP in the presence of a proton gradient across the membrane. This is ATP synthase epsilon chain from Shewanella sp. (strain ANA-3).